The chain runs to 552 residues: Hyaluronan synthase 2 (552 aa).

The Cytoplasmic portion of the chain corresponds to 1-11; the sequence is MHCERFLCVLR. The chain crosses the membrane as a helical span at residues 12–32; the sequence is IIGTTLFGVSLLLGITAAYIV. At 33–45 the chain is on the extracellular side; it reads GYQFIQTDNYYFS. The helical transmembrane segment at 46 to 66 threads the bilayer; that stretch reads FGLYGAFLASHLIIQSLFAFL. The Cytoplasmic segment spans residues 67–374; the sequence is EHRKMKKSLE…NAMWFHKHHL (308 aa). Phosphothreonine is present on Thr-110. Lys-190 is covalently cross-linked (Glycyl lysine isopeptide (Lys-Gly) (interchain with G-Cter in ubiquitin)). A glycan (O-linked (GlcNAc) serine) is linked at Ser-221. At Thr-328 the chain carries Phosphothreonine. A helical membrane pass occupies residues 375-395; that stretch reads WMTYEAVITGFFPFFLIATVI. Over 396 to 402 the chain is Extracellular; it reads QLFYRGK. A helical transmembrane segment spans residues 403–423; that stretch reads IWNILLFLLTVQLVGLIKSSF. Over 424–429 the chain is Cytoplasmic; it reads ASCLRG. Residues 430–450 traverse the membrane as a helical segment; that stretch reads NIVMVFMSLYSVLYMSSLLPA. Topologically, residues 451-475 are extracellular; that stretch reads KMFAIATINKAGWGTSGRKTIVVNF. A helical transmembrane segment spans residues 476–496; that stretch reads IGLIPVSVWFTILLGGVIFTI. The Cytoplasmic portion of the chain corresponds to 497–510; it reads YKESKKPFSESKQT. Residues 511–531 form a helical membrane-spanning segment; sequence VLIVGTLIYACYWVMLLTLYV. Residues 532-552 are Extracellular-facing; sequence VLINKCGRRKKGQQYDMVLDV.

This sequence belongs to the NodC/HAS family. As to quaternary structure, homodimer; dimerization promotes enzymatic activity. Forms heterodimer with HAS3. Forms heterodimer with HAS1. Mg(2+) is required as a cofactor. In terms of processing, phosphorylation at Thr-328 is essential for hyaluronan synthase activity. O-GlcNAcylation at Ser-221 increases the stability of HAS2 and plasma membrane localization. Post-translationally, ubiquitination at Lys-190; this ubiquitination is essential for hyaluronan synthase activity and homo- or hetero-oligomerization. Can also be poly-ubiquitinated. Deubiquitinated by USP17L22/USP17 and USP4. USP17L22/USP17 efficiently removes 'Lys-63'- and 'Lys-48'-linked polyubiquitin chains, whereas USP4 preferentially removes monoubiquitination and, partially, both 'Lys-63'- and 'Lys-48'-linked polyubiquitin chain. In terms of tissue distribution, expressed in heart, brain, spleen, lung and skeletal muscle.

It localises to the cell membrane. Its subcellular location is the endoplasmic reticulum membrane. The protein resides in the vesicle. It is found in the golgi apparatus membrane. The protein localises to the lysosome. The catalysed reaction is [hyaluronan](n) + UDP-N-acetyl-alpha-D-glucosamine = N-acetyl-beta-D-glucosaminyl-(1-&gt;4)-[hyaluronan](n) + UDP + H(+). The enzyme catalyses N-acetyl-beta-D-glucosaminyl-(1-&gt;4)-[hyaluronan](n) + UDP-alpha-D-glucuronate = [hyaluronan](n+1) + UDP + H(+). It participates in glycan biosynthesis; hyaluronan biosynthesis. Functionally, catalyzes the addition of GlcNAc or GlcUA monosaccharides to the nascent hyaluronan polymer. Therefore, it is essential to hyaluronan synthesis a major component of most extracellular matrices that has a structural role in tissues architectures and regulates cell adhesion, migration and differentiation. This is one of the isozymes catalyzing that reaction and it is particularly responsible for the synthesis of high molecular mass hyaluronan. Required for the transition of endocardial cushion cells into mesenchymal cells, a process crucial for heart development. May also play a role in vasculogenesis. High molecular mass hyaluronan also play a role in early contact inhibition a process which stops cell growth when cells come into contact with each other or the extracellular matrix. In terms of biological role, catalyzes the addition of GlcNAc or GlcUA monosaccharides to the nascent hyaluronan polymer. Therefore, it is essential to hyaluronan synthesis a major component of most extracellular matrices that has a structural role in tissues architectures and regulates cell adhesion, migration and differentiation. This is one of three isoenzymes responsible for cellular hyaluronan synthesis and it is particularly responsible for the synthesis of high molecular mass hyaluronan. The sequence is that of Hyaluronan synthase 2 from Mus musculus (Mouse).